An 87-amino-acid chain; its full sequence is uncharacterized protein (87 aa).

It to B.subtilis XkdR.

This is an uncharacterized protein from Bacillus subtilis (strain 168).